Reading from the N-terminus, the 268-residue chain is MMKLRVSEAPFPGAPVMVMIAGLGGLGGYWLAQQSALSRDYQVVVYDQRGTGDNADTLPEGYTLADMAQELHRALLIHGVHRYAVLGHALGGLVGLELALAFPEAVSALVIVNGWLSLSAWTRRCFEARERLLLDSGPAAYIAAQPLFLYPPSWAQENQPRLEAEEALHNAHFQGTENLLRRLWALKNADYRERAARVITPVQIICARDDMLVPWTCSQALHEALPHSRLDVMDFGGHACNVTAPQPFHSLLYAGLASLAPAPHKETV.

Positions 15–119 (PVMVMIAGLG…VIVNGWLSLS (105 aa)) constitute an AB hydrolase-1 domain.

The protein belongs to the AB hydrolase superfamily. Hydrolase RutD family.

It catalyses the reaction carbamate + 2 H(+) = NH4(+) + CO2. Involved in pyrimidine catabolism. May facilitate the hydrolysis of carbamate, a reaction that can also occur spontaneously. This is Putative carbamate hydrolase RutD from Cronobacter sakazakii (strain ATCC BAA-894) (Enterobacter sakazakii).